The primary structure comprises 414 residues: MSYYDTIFNKHIDKIKSEGRYREFKSLKRQADNFPFAEYEDKQIVMWCINDYLGMSKHVKVMQASIDALLKYGVGSGGTRNIGGNNISILELEKELADLHSKETALVFTSGFVANDTTLASLAKIIPDIVFFSDELNHASIIAGIKSSRAEKYVYRHLDVQHLEKLLQSVDINKPKIIVFESAYSMDGFFSPIKDIINLAKKYNALTFIDEVHTVGLYGKQGGGISELLDCSNQIDIIQGTLAKAYGTIGGYITSNYNLIDAIRLTAPGFIFTTSLPPVISTAATHSIRHLKESNEERIKHQEVVTKLKNSFEHFNIPYLKNESHIIPIIIGDPIKATKVSNMLLNEYGIYVQHINFPTVPRGTERLRIIPTPAHTDKMINDLSTALVHIFDELDIELSSAKELNKEVRLHLIA.

R22, S133, and K152 together coordinate substrate. Residues S185, H213, and T241 each coordinate pyridoxal 5'-phosphate. The active site involves K244. N6-(pyridoxal phosphate)lysine is present on K244. Residues T273 and T274 each coordinate pyridoxal 5'-phosphate. T359 contacts substrate.

Belongs to the class-II pyridoxal-phosphate-dependent aminotransferase family. Homodimer. It depends on pyridoxal 5'-phosphate as a cofactor.

It catalyses the reaction succinyl-CoA + glycine + H(+) = 5-aminolevulinate + CO2 + CoA. Its pathway is porphyrin-containing compound metabolism; protoporphyrin-IX biosynthesis; 5-aminolevulinate from glycine: step 1/1. This chain is 5-aminolevulinate synthase (hemA), found in Rickettsia prowazekii (strain Madrid E).